The chain runs to 61 residues: Small ribosomal subunit protein uS14B (61 aa).

The Zn(2+) site is built by C24, C27, C40, and C43.

The protein belongs to the universal ribosomal protein uS14 family. Zinc-binding uS14 subfamily. As to quaternary structure, part of the 30S ribosomal subunit. Contacts proteins S3 and S10. It depends on Zn(2+) as a cofactor.

Functionally, binds 16S rRNA, required for the assembly of 30S particles and may also be responsible for determining the conformation of the 16S rRNA at the A site. The polypeptide is Small ribosomal subunit protein uS14B (Kineococcus radiotolerans (strain ATCC BAA-149 / DSM 14245 / SRS30216)).